The primary structure comprises 569 residues: MGQIVGSMHMNVAEVFSNRRKRKRSTDSSLGKDDPAQLDTTQPKKKKLLTTTQYIYKALFKEEKNSDVAVMALDKVWHLHKVYLSQSPYFYTMFNGTWREAQQNFIQITILDDRITVASLDAVFGSMYSDEIEIESADVISVLATATLFHLDGIIDKCAEVMVDNISPETAIQYYEAACQYGVVGVKKSTFQWFQINLLSIYSKQPNLLRHISIELMSALTASPDLYVMQTEFSLYTLLRTWMFLRLHPDYDPEDPVQRAEALKTQELLVNAGVETHAPSGDVVQWTYFTSRSEERSFLATPEGQPYVKVFQKLRTQYLTNHYMDLKIIYNDNIIPKEWLYRHIHNHWDALLRIDHGQEDCSPQQLDDEQFFENCMRCGRMLLEPGYQKWRWTGFNFGMDLILIMDSRRLNIRRHHRHEHERVLSLQTKRKFMVRTTVTSINAQRQAVFTQTSEICSLSLEKNEEVPLMVLDPKLVHPLLISINMLVVMPPNQSFKEIVPLSEEATTSLSIPISEIGANSDRPLSPSSADDSAVFIGDSEPSTPSSPAPRPRIAWSASETGAICGQLAC.

Residues 17 to 43 form a disordered region; the sequence is SNRRKRKRSTDSSLGKDDPAQLDTTQP. The region spanning 66–136 is the BTB domain; that stretch reads SDVAVMALDK…MYSDEIEIES (71 aa). A disordered region spans residues 517–553; the sequence is GANSDRPLSPSSADDSAVFIGDSEPSTPSSPAPRPRI.

It localises to the cytoplasm. In terms of biological role, required for the specification of pole cells and germ cell formation. Mothers with reduced glc function give rise to sterile adult progeny that lack germ cells. This is Protein germ cell-less (gcl) from Drosophila melanogaster (Fruit fly).